The primary structure comprises 409 residues: Isocitrate dehydrogenase [NADP] 1 (409 aa).

Lys75, Thr78, Thr80, and Arg85 together coordinate NADP(+). Asp255, Asp278, and Asp282 together coordinate Mn(2+). NADP(+) contacts are provided by Gly313, Thr314, Val315, His318, and Asn331.

This sequence belongs to the isocitrate and isopropylmalate dehydrogenases family. As to quaternary structure, homodimer. Requires Mg(2+) as cofactor. It depends on Mn(2+) as a cofactor.

The catalysed reaction is D-threo-isocitrate + NADP(+) = 2-oxoglutarate + CO2 + NADPH. Functionally, catalyzes the oxidative decarboxylation of isocitrate to 2-oxoglutarate and carbon dioxide with the concomitant reduction of NADP(+). The polypeptide is Isocitrate dehydrogenase [NADP] 1 (icd) (Mycobacterium bovis (strain ATCC BAA-935 / AF2122/97)).